We begin with the raw amino-acid sequence, 86 residues long: uncharacterized protein (86 aa).

This is an uncharacterized protein from Beak and feather disease virus (BFDV).